A 201-amino-acid chain; its full sequence is 3-isopropylmalate dehydratase small subunit (201 aa).

It belongs to the LeuD family. LeuD type 1 subfamily. Heterodimer of LeuC and LeuD.

The enzyme catalyses (2R,3S)-3-isopropylmalate = (2S)-2-isopropylmalate. It functions in the pathway amino-acid biosynthesis; L-leucine biosynthesis; L-leucine from 3-methyl-2-oxobutanoate: step 2/4. Its function is as follows. Catalyzes the isomerization between 2-isopropylmalate and 3-isopropylmalate, via the formation of 2-isopropylmaleate. This is 3-isopropylmalate dehydratase small subunit from Cereibacter sphaeroides (strain KD131 / KCTC 12085) (Rhodobacter sphaeroides).